We begin with the raw amino-acid sequence, 227 residues long: Probable methylthioribulose-1-phosphate dehydratase (227 aa).

Cys87 is a binding site for substrate. His105 and His107 together coordinate Zn(2+). Glu129 acts as the Proton donor/acceptor in catalysis. His185 lines the Zn(2+) pocket.

This sequence belongs to the aldolase class II family. MtnB subfamily. Requires Zn(2+) as cofactor.

It is found in the cytoplasm. The catalysed reaction is 5-(methylsulfanyl)-D-ribulose 1-phosphate = 5-methylsulfanyl-2,3-dioxopentyl phosphate + H2O. It participates in amino-acid biosynthesis; L-methionine biosynthesis via salvage pathway; L-methionine from S-methyl-5-thio-alpha-D-ribose 1-phosphate: step 2/6. Functionally, catalyzes the dehydration of methylthioribulose-1-phosphate (MTRu-1-P) into 2,3-diketo-5-methylthiopentyl-1-phosphate (DK-MTP-1-P). This is Probable methylthioribulose-1-phosphate dehydratase from Drosophila mojavensis (Fruit fly).